The sequence spans 1099 residues: Carbamoyl phosphate synthase large chain (1099 aa).

Positions 1-402 (MPKREDIKRI…ALGKALRSLE (402 aa)) are carboxyphosphate synthetic domain. ATP contacts are provided by R129, R169, G175, G176, E208, V210, E215, G241, I242, H243, Q285, and E299. The ATP-grasp 1 domain occupies 133 to 328 (KETMEKAGLE…IAKVAALLAV (196 aa)). Positions 285, 299, and 301 each coordinate Mg(2+). Residues Q285, E299, and N301 each coordinate Mn(2+). Positions 403-541 (LDAAPKLDLE…STYNGVENEA (139 aa)) are oligomerization domain. The segment at 542–944 (VPSDREKIMI…AFAKAQIAAG (403 aa)) is carbamoyl phosphate synthetic domain. Positions 666–857 (AKLLKQIGLK…VARIAAKIMV (192 aa)) constitute an ATP-grasp 2 domain. ATP is bound by residues R702, K741, L743, E748, G773, V774, H775, S776, Q816, and E828. 3 residues coordinate Mg(2+): Q816, E828, and N830. Positions 816, 828, and 830 each coordinate Mn(2+). Positions 945–1099 (NPLPTTGAIL…VRRLTDTWKM (155 aa)) constitute an MGS-like domain. The interval 945 to 1099 (NPLPTTGAIL…VRRLTDTWKM (155 aa)) is allosteric domain.

Belongs to the CarB family. As to quaternary structure, composed of two chains; the small (or glutamine) chain promotes the hydrolysis of glutamine to ammonia, which is used by the large (or ammonia) chain to synthesize carbamoyl phosphate. Tetramer of heterodimers (alpha,beta)4. It depends on Mg(2+) as a cofactor. The cofactor is Mn(2+).

The catalysed reaction is hydrogencarbonate + L-glutamine + 2 ATP + H2O = carbamoyl phosphate + L-glutamate + 2 ADP + phosphate + 2 H(+). It carries out the reaction hydrogencarbonate + NH4(+) + 2 ATP = carbamoyl phosphate + 2 ADP + phosphate + 2 H(+). Its pathway is amino-acid biosynthesis; L-arginine biosynthesis; carbamoyl phosphate from bicarbonate: step 1/1. It participates in pyrimidine metabolism; UMP biosynthesis via de novo pathway; (S)-dihydroorotate from bicarbonate: step 1/3. In terms of biological role, large subunit of the glutamine-dependent carbamoyl phosphate synthetase (CPSase). CPSase catalyzes the formation of carbamoyl phosphate from the ammonia moiety of glutamine, carbonate, and phosphate donated by ATP, constituting the first step of 2 biosynthetic pathways, one leading to arginine and/or urea and the other to pyrimidine nucleotides. The large subunit (synthetase) binds the substrates ammonia (free or transferred from glutamine from the small subunit), hydrogencarbonate and ATP and carries out an ATP-coupled ligase reaction, activating hydrogencarbonate by forming carboxy phosphate which reacts with ammonia to form carbamoyl phosphate. In Thermotoga petrophila (strain ATCC BAA-488 / DSM 13995 / JCM 10881 / RKU-1), this protein is Carbamoyl phosphate synthase large chain.